The sequence spans 172 residues: Large ribosomal subunit protein uL10 (172 aa).

The protein belongs to the universal ribosomal protein uL10 family. Part of the ribosomal stalk of the 50S ribosomal subunit. The N-terminus interacts with L11 and the large rRNA to form the base of the stalk. The C-terminus forms an elongated spine to which L12 dimers bind in a sequential fashion forming a multimeric L10(L12)X complex.

In terms of biological role, forms part of the ribosomal stalk, playing a central role in the interaction of the ribosome with GTP-bound translation factors. The sequence is that of Large ribosomal subunit protein uL10 from Francisella tularensis subsp. mediasiatica (strain FSC147).